The sequence spans 226 residues: EHVSVFVIFAQTHEPSGECMFEFDEDEVFHVDLDKKQAIWYLPEFGRMFSVEAQGGLANIAAAKSNLNACIQHSNHTQAPNEPPEVIVFPKEPVELGQPNTLICHIDKFFPPVLNVTWLRNGQPVTEGVSETVFLASTEFRFRKFHYLAFVPSAADVYDCRVEHWGLDAPLLTHWEAQEPIQMPETTETVVCALGLVVGLAGVVVGIVLITKALRSSPDPRARRPL.

Residues 1-189 (EHVSVFVIFA…PIQMPETTET (189 aa)) are Extracellular-facing. Residues Asn-75 and Asn-115 are each glycosylated (N-linked (GlcNAc...) asparagine). The 93-residue stretch at 84-176 (PEVIVFPKEP…LDAPLLTHWE (93 aa)) folds into the Ig-like C1-type domain. Cys-104 and Cys-160 are disulfide-bonded. Residues 190–210 (VVCALGLVVGLAGVVVGIVLI) form a helical membrane-spanning segment. Residues 211-226 (TKALRSSPDPRARRPL) lie on the Cytoplasmic side of the membrane.

Belongs to the MHC class II family.

It localises to the membrane. The sequence is that of RLA class II histocompatibility antigen, DP alpha-1 chain from Oryctolagus cuniculus (Rabbit).